An 82-amino-acid polypeptide reads, in one-letter code: Cytochrome b559 subunit alpha (82 aa).

The chain crosses the membrane as a helical span at residues Val-22 to Tyr-36. His-24 is a binding site for heme.

Belongs to the PsbE/PsbF family. In terms of assembly, heterodimer of an alpha subunit and a beta subunit. PSII is composed of 1 copy each of membrane proteins PsbA, PsbB, PsbC, PsbD, PsbE, PsbF, PsbH, PsbI, PsbJ, PsbK, PsbL, PsbM, PsbT, PsbX, PsbY, Psb30/Ycf12, peripheral proteins PsbO, CyanoQ (PsbQ), PsbU, PsbV and a large number of cofactors. It forms dimeric complexes. Heme b is required as a cofactor.

The protein localises to the cellular thylakoid membrane. Functionally, this b-type cytochrome is tightly associated with the reaction center of photosystem II (PSII). PSII is a light-driven water:plastoquinone oxidoreductase that uses light energy to abstract electrons from H(2)O, generating O(2) and a proton gradient subsequently used for ATP formation. It consists of a core antenna complex that captures photons, and an electron transfer chain that converts photonic excitation into a charge separation. The protein is Cytochrome b559 subunit alpha of Prochlorococcus marinus (strain MIT 9303).